The sequence spans 393 residues: S-adenosylmethionine synthase (393 aa).

Residue E9 coordinates Mg(2+). ATP is bound at residue H15. Residue E43 participates in K(+) binding. Positions 56 and 99 each coordinate L-methionine. ATP-binding positions include 167–169, 235–238, D246, 252–253, A269, K273, and K277; these read DGK, SGRF, and RK. Residue D246 coordinates L-methionine. Residue K277 participates in L-methionine binding.

The protein belongs to the AdoMet synthase family. Homotetramer. It depends on Mn(2+) as a cofactor. Mg(2+) is required as a cofactor. The cofactor is Co(2+). Requires K(+) as cofactor.

Its subcellular location is the cytoplasm. The enzyme catalyses L-methionine + ATP + H2O = S-adenosyl-L-methionine + phosphate + diphosphate. Its pathway is amino-acid biosynthesis; S-adenosyl-L-methionine biosynthesis; S-adenosyl-L-methionine from L-methionine: step 1/1. In terms of biological role, catalyzes the formation of S-adenosylmethionine from methionine and ATP. The reaction comprises two steps that are both catalyzed by the same enzyme: formation of S-adenosylmethionine (AdoMet) and triphosphate, and subsequent hydrolysis of the triphosphate. The chain is S-adenosylmethionine synthase (SAMS) from Solanum palustre (Non-tuber-performing potato).